The chain runs to 478 residues: Methionine aminopeptidase 2 (478 aa).

Residues 1 to 122 (MAGVEEVAAS…TDPPSVPICD (122 aa)) form a disordered region. Alanine 2 carries the N-acetylalanine modification. The segment covering 36 to 46 (KKKRRKKKKSK) has biased composition (basic residues). Serine 45 carries the phosphoserine modification. Residues 55 to 79 (EPDKESGASVDEVARQLERSALEDK) show a composition bias toward basic and acidic residues. Phosphoserine; alternate occurs at positions 60 and 63. O-linked (GlcNAc) serine; alternate glycosylation is found at serine 60 and serine 63. Serine 74 is subject to Phosphoserine. Residues 80 to 92 (ERDEDDEDGDGDG) show a composition bias toward acidic residues. The segment covering 97-109 (GKKKKKKKKKRGP) has biased composition (basic residues). Histidine 231 is a binding site for substrate. A divalent metal cation-binding residues include aspartate 251, aspartate 262, and histidine 331. Histidine 339 is a substrate binding site. A divalent metal cation-binding residues include glutamate 364 and glutamate 459.

Belongs to the peptidase M24A family. Methionine aminopeptidase eukaryotic type 2 subfamily. As to quaternary structure, interacts strongly with the eIF-2 gamma-subunit EIF2S3. Binds EIF2S1 at low magnesium concentrations. Co(2+) is required as a cofactor. It depends on Zn(2+) as a cofactor. The cofactor is Mn(2+). Fe(2+) serves as cofactor. Post-translationally, contains approximately 12 O-linked N-acetylglucosamine (GlcNAc) residues. O-glycosylation is required for EIF2S1 binding.

It is found in the cytoplasm. It carries out the reaction Release of N-terminal amino acids, preferentially methionine, from peptides and arylamides.. In terms of biological role, cotranslationally removes the N-terminal methionine from nascent proteins. The N-terminal methionine is often cleaved when the second residue in the primary sequence is small and uncharged (Met-Ala-, Cys, Gly, Pro, Ser, Thr, or Val). The catalytic activity of human METAP2 toward Met-Val peptides is consistently two orders of magnitude higher than that of METAP1, suggesting that it is responsible for processing proteins containing N-terminal Met-Val and Met-Thr sequences in vivo. Functionally, protects eukaryotic initiation factor EIF2S1 from translation-inhibiting phosphorylation by inhibitory kinases such as EIF2AK2/PKR and EIF2AK1/HCR. Plays a critical role in the regulation of protein synthesis. This chain is Methionine aminopeptidase 2, found in Homo sapiens (Human).